We begin with the raw amino-acid sequence, 148 residues long: Nickel and cobalt resistance protein CnrR (148 aa).

The N-terminal stretch at methionine 1–alanine 26 is a signal peptide. Residues leucine 28–glutamine 148 lie on the Periplasmic side of the membrane. Residues asparagine 54–leucine 117 adopt a coiled-coil conformation.

It to A.xylosoxydans NccX.

It localises to the periplasm. CnrH alone is able to activate cnr expression, while both CnrY and CrnR (CnrX) are needed for nickel induction of CnrH. Has been suggested to bind nickel. The chain is Nickel and cobalt resistance protein CnrR (cnrR) from Cupriavidus metallidurans (strain ATCC 43123 / DSM 2839 / NBRC 102507 / CH34) (Ralstonia metallidurans).